Reading from the N-terminus, the 1119-residue chain is MQFRTVLDVKVVDVEKRRNPSKHYVYLINVTYSDSTSHIIYRRYSKFFDLQMQILDKFPIEGGQKDPKKRIIPFLPGKILFRRSHVRDVAMKRLRFIDDYCRALVRLPPQISQSEEVLRFFETKPDDINPPVEDYGSKRKSGLDSSEPMVLEQYVVVANYERQENSEISLKAGETVDVIEKSESGWWFVSTAEEQGWVPATYLDSQSGTRDDLDLGTSRSGEVTKRRKAHLKRLDRRWTLGGIVNRQQSREEKYVSVQAYASQGKDEIGFEKGVTVEVIQKNLEGWWYIRYQGKEGWAPASYLKKLKDDLSPRKKTLTGPVEIIGNIMEISNLLNKKAVSEKDIQTDGEATTPERHISKSEISLPMPYAPEAGVAPTVVTALGMNSGSSATLQENKSRAEPGSPAIARVAPHRVEIGSPNLRQKPPPRRDANLAFQLPKPPEAPTVEAEYYTIAEFQSSISDGISFRGGQKADVIEKNSGGWWYVQIGDTEGWAPSSYIDKRKKPNLSRRTSTLTRPKVPPPAPPVKKQDSEEGPSLGGSASKAPESPQRVYEEPEYDVPALGFDSELDCNPPKPKTHNSPKPEPRKFEIKSNPAAAERIAQAGKASPLLKVMTSPLRKRNSLENINKEEVIYENEGFRFSSDDFASGCDSHTPRSLTLGRKPFGSSSGGGKPLRKVSPDLNRSHSLGRAERHSSKLFSDESARNPKREPVMRKDVEIRIGQSPLARPKPVVRPKPLLTKSEPQSPERMDISSIRRHLRPTGSLRQGAIRAMRGEDSETASVVSSEDSTSSRSTSDLSSVYSKGSRGGESDHESVLFRTTDAYERAQESELSFPAGVEVEVLEKQESGWWFVRWGSDEGWVPTFYLEPIKHTHNVGIQESRDSPLVDLGSTNKSNSLEKNEQRVQALNNLNQQNLRSMSNPSPPIPSKPPGGFSKPTAMLNGSSVRMRNGVRQAAVRPQSVFVSPPQPLKETNIHTGSLRRNESLGAGDHLRSTGGVRRNSSFTAVRPQPVTDVRVRAGTTITAPAGSSSPLIAQRNGIPISTVRPKPIEKMQLIHNNLREVYVSIADYRGDEETMGFSEGTSLEVLEKNPNGWWYCQVLDGLQGRKGWVPSNYLERKK.

The 125-residue stretch at 4 to 128 (RTVLDVKVVD…RFFETKPDDI (125 aa)) folds into the PX domain. SH3 domains are found at residues 149–208 (MVLE…SQSG) and 249–308 (SREE…KLKD). Disordered regions lie at residues 388–429 (SSAT…PPRR), 494–595 (APSS…SNPA), 641–815 (SSDD…HESV), 914–941 (NLRS…AMLN), and 957–1004 (RPQS…SSFT). The SH3 3 domain occupies 445–504 (TVEAEYYTIAEFQSSISDGISFRGGQKADVIEKNSGGWWYVQIGDTEGWAPSSYIDKRKK). Composition is skewed to basic and acidic residues over residues 581–590 (PKPEPRKFEI) and 688–718 (GRAE…DVEI). Positions 779–802 (TASVVSSEDSTSSRSTSDLSSVYS) are enriched in low complexity. Over residues 806 to 815 (RGGESDHESV) the composition is skewed to basic and acidic residues. Residues 812–871 (HESVLFRTTDAYERAQESELSFPAGVEVEVLEKQESGWWFVRWGSDEGWVPTFYLEPIKH) enclose the SH3 4 domain. The SH3 5 domain occupies 1058-1119 (NLREVYVSIA…VPSNYLERKK (62 aa)).

This sequence belongs to the SH3PXD2 family. In terms of processing, tyrosine phosphorylated.

It is found in the cytoplasm. It localises to the cell projection. The protein localises to the podosome. Adapter protein involved in invadopodia and podosome formation and extracellular matrix degradation. The polypeptide is SH3 and PX domain-containing protein 2A (sh3pxd2a) (Danio rerio (Zebrafish)).